A 341-amino-acid polypeptide reads, in one-letter code: Biotin synthase (341 aa).

Positions 40-267 constitute a Radical SAM core domain; that stretch reads AEIQVSTLLS…RSMVRLSAGR (228 aa). [4Fe-4S] cluster-binding residues include Cys-55, Cys-59, and Cys-62. Cys-99, Cys-130, Cys-190, and Arg-262 together coordinate [2Fe-2S] cluster.

The protein belongs to the radical SAM superfamily. Biotin synthase family. Homodimer. The cofactor is [4Fe-4S] cluster. [2Fe-2S] cluster is required as a cofactor.

It catalyses the reaction (4R,5S)-dethiobiotin + (sulfur carrier)-SH + 2 reduced [2Fe-2S]-[ferredoxin] + 2 S-adenosyl-L-methionine = (sulfur carrier)-H + biotin + 2 5'-deoxyadenosine + 2 L-methionine + 2 oxidized [2Fe-2S]-[ferredoxin]. The protein operates within cofactor biosynthesis; biotin biosynthesis; biotin from 7,8-diaminononanoate: step 2/2. Catalyzes the conversion of dethiobiotin (DTB) to biotin by the insertion of a sulfur atom into dethiobiotin via a radical-based mechanism. The chain is Biotin synthase from Xylella fastidiosa (strain 9a5c).